Reading from the N-terminus, the 321-residue chain is Secreted RxLR effector protein 71 (321 aa).

Residues 1-23 (MRPTGWRWPVLSLLLVLLPFQAA) form the signal peptide. A RxLR motif is present at residues 84–87 (RSLR). N-linked (GlcNAc...) asparagine glycosylation occurs at Asn114. Residues 210–237 (VSLGRDGNGPVRGISSSPTRLTRPRMGG) are disordered.

This sequence belongs to the RxLR effector family.

It is found in the secreted. It localises to the host cell. Its function is as follows. Secreted effector that partially suppresses the host cell death induced by cell death-inducing proteins. This is Secreted RxLR effector protein 71 from Plasmopara viticola (Downy mildew of grapevine).